The chain runs to 418 residues: Queuine tRNA-ribosyltransferase accessory subunit 2 (418 aa).

Residues Cys-325, Cys-327, Cys-330, and His-356 each coordinate Zn(2+).

Belongs to the queuine tRNA-ribosyltransferase family. QTRT2 subfamily. In terms of assembly, heterodimer of a catalytic subunit and an accessory subunit. Zn(2+) is required as a cofactor.

It is found in the cytoplasm. In terms of biological role, non-catalytic subunit of the queuine tRNA-ribosyltransferase (TGT) that catalyzes the base-exchange of a guanine (G) residue with queuine (Q) at position 34 (anticodon wobble position) in tRNAs with GU(N) anticodons (tRNA-Asp, -Asn, -His and -Tyr), resulting in the hypermodified nucleoside queuosine (7-(((4,5-cis-dihydroxy-2-cyclopenten-1-yl)amino)methyl)-7-deazaguanosine). This Drosophila melanogaster (Fruit fly) protein is Queuine tRNA-ribosyltransferase accessory subunit 2.